Reading from the N-terminus, the 131-residue chain is Profilin-2 (131 aa).

Cysteine 13 and cysteine 115 are joined by a disulfide. An Involved in PIP2 interaction motif is present at residues 81 to 97; that stretch reads AVIRGKKGSGGITVKKT. Threonine 111 carries the post-translational modification Phosphothreonine.

The protein belongs to the profilin family. As to quaternary structure, occurs in many kinds of cells as a complex with monomeric actin in a 1:1 ratio. Post-translationally, phosphorylated by MAP kinases. As to expression, pollen specific.

The protein localises to the cytoplasm. The protein resides in the cytoskeleton. Binds to actin and affects the structure of the cytoskeleton. At high concentrations, profilin prevents the polymerization of actin, whereas it enhances it at low concentrations. By binding to PIP2, it inhibits the formation of IP3 and DG. The protein is Profilin-2 (PRO2) of Zea mays (Maize).